Consider the following 351-residue polypeptide: Ubiquinol oxidase 4, chloroplastic/chromoplastic (351 aa).

The transit peptide at M1 to Q56 directs the protein to the chloroplast and chromoplast. The segment at E71–S91 is disordered. Residues F132–M152 traverse the membrane as a helical segment. Fe cation is bound by residues E136, E175, and H178. Residues F195 to S215 form a helical membrane-spanning segment. Fe cation contacts are provided by E227, E296, and H299.

The protein belongs to the alternative oxidase family. Requires Fe cation as cofactor. In terms of tissue distribution, ubiquitous.

The protein localises to the plastid. Its subcellular location is the chloroplast thylakoid membrane. It is found in the chromoplast membrane. It catalyses the reaction 2 a ubiquinol + O2 = 2 a ubiquinone + 2 H2O. Its function is as follows. Acts early in chloroplast biogenesis as a component of a redox chain responsible for phytoene desaturation. Prevents the generation of toxic oxygen radicals and photooxidation of the nascent photosynthetic apparatus. Involved in the differentiation of multiple plastid types, including chloroplasts, amyloplasts, and etioplasts. Might participate in the chloroplast respiratory chain. The sequence is that of Ubiquinol oxidase 4, chloroplastic/chromoplastic (AOX4) from Arabidopsis thaliana (Mouse-ear cress).